The sequence spans 359 residues: MKYPPVHYHDYLGLNPLLNAQHPKSTEYGKPAHDELLFIIVHQTYELWFKQILFELDSVLSTFQKPTVAESEMGIASARLERIVSILKLIIGQVDVLETMTPLDFLDFRDMLYPASGFQSYQWRLIETKLGLRIGDRLAYNQSPFYKSLSESQQGEMLNIMNQPSLHDSVEKWLERTPFLQGENFNFWDSYKEAVNKMFQDDITTVKNNPRLPDEEKAKTVAGLEQTLKSFDALFDEEAFNKLRAEGQFRLSYKAMHAALLIQLHRDQPILQTPFRIIRALLDIDETMTTWRYRHALMAMRMLGQKIGTGGSSGHKYLADATAKHKIFGDFFNLTTFFIPRSQVPPLPKAIADRMSFHY.

Residues 38-42 (FIIVH) and Arg-109 each bind substrate. Heme is bound at residue His-295. Thr-309 contacts substrate.

This sequence belongs to the tryptophan 2,3-dioxygenase family. In terms of assembly, homotetramer. It depends on heme as a cofactor.

The catalysed reaction is L-tryptophan + O2 = N-formyl-L-kynurenine. It participates in amino-acid degradation; L-tryptophan degradation via kynurenine pathway; L-kynurenine from L-tryptophan: step 1/2. Functionally, heme-dependent dioxygenase that catalyzes the oxidative cleavage of the L-tryptophan (L-Trp) pyrrole ring and converts L-tryptophan to N-formyl-L-kynurenine. Catalyzes the oxidative cleavage of the indole moiety. This is Tryptophan 2,3-dioxygenase from Bdellovibrio bacteriovorus (strain ATCC 15356 / DSM 50701 / NCIMB 9529 / HD100).